Here is a 665-residue protein sequence, read N- to C-terminus: tRNA 5-methylaminomethyl-2-thiouridine biosynthesis bifunctional protein MnmC (665 aa).

The interval Met1–Ile235 is tRNA (mnm(5)s(2)U34)-methyltransferase. The FAD-dependent cmnm(5)s(2)U34 oxidoreductase stretch occupies residues Ile266–His665.

It in the N-terminal section; belongs to the methyltransferase superfamily. tRNA (mnm(5)s(2)U34)-methyltransferase family. This sequence in the C-terminal section; belongs to the DAO family. FAD is required as a cofactor.

It localises to the cytoplasm. It catalyses the reaction 5-aminomethyl-2-thiouridine(34) in tRNA + S-adenosyl-L-methionine = 5-methylaminomethyl-2-thiouridine(34) in tRNA + S-adenosyl-L-homocysteine + H(+). Its function is as follows. Catalyzes the last two steps in the biosynthesis of 5-methylaminomethyl-2-thiouridine (mnm(5)s(2)U) at the wobble position (U34) in tRNA. Catalyzes the FAD-dependent demodification of cmnm(5)s(2)U34 to nm(5)s(2)U34, followed by the transfer of a methyl group from S-adenosyl-L-methionine to nm(5)s(2)U34, to form mnm(5)s(2)U34. In Pseudomonas syringae pv. syringae (strain B728a), this protein is tRNA 5-methylaminomethyl-2-thiouridine biosynthesis bifunctional protein MnmC.